We begin with the raw amino-acid sequence, 393 residues long: S-adenosylmethionine synthase 3 (393 aa).

A K(+)-binding site is contributed by E43. Residues E56 and Q99 each coordinate L-methionine. ATP is bound by residues 167–169 (DGK), 235–238 (SGRF), D246, 252–253 (RK), A269, K273, and K277. An L-methionine-binding site is contributed by D246. K277 is a binding site for L-methionine.

The protein belongs to the AdoMet synthase family. As to quaternary structure, homotetramer. It depends on Mn(2+) as a cofactor. Mg(2+) is required as a cofactor. The cofactor is Co(2+). Requires K(+) as cofactor.

The protein resides in the cytoplasm. The catalysed reaction is L-methionine + ATP + H2O = S-adenosyl-L-methionine + phosphate + diphosphate. It participates in amino-acid biosynthesis; S-adenosyl-L-methionine biosynthesis; S-adenosyl-L-methionine from L-methionine: step 1/1. In terms of biological role, catalyzes the formation of S-adenosylmethionine from methionine and ATP. The reaction comprises two steps that are both catalyzed by the same enzyme: formation of S-adenosylmethionine (AdoMet) and triphosphate, and subsequent hydrolysis of the triphosphate. The protein is S-adenosylmethionine synthase 3 (SAM3) of Actinidia chinensis var. chinensis (Chinese soft-hair kiwi).